The primary structure comprises 546 residues: MAKIIAFDEEARRGLEKGLNTLADAVKVTLGPKGRNVVLEKSWGAPTITNDGVSIAREIELEDPYEKIGAELVKEVAKKTDDVAGDGTTTATVLAQALVREGLRNVAAGSNPMGIKRGIELATAKVTEALLASAKEVETEEQIAATAGISAADPAIGEQIAKAMYAVGGGKLNKESVITVEESNTFGVDLEVTEGMRFDKGYISGYFATDMERLEAVLEDPYILLVSGKISNIKELLPLLEKVMQTGKPLLIIAEDVEGEALSTLVVNKIRGTFKSVAVKAPGFGDRRKAQLQDMAILTGSQVISEEVGLSLETADLPLLGRARKVVVTKDDTTIVEGAGDSAQIDGRVNQIRTEIENSDSEYDREKLQERLAKLSGGVAVIKVGAATEVELTERKHRIEDAVRNAKAAVEEGIVAGGGVALLQAAHVLANDLDLTGDEATGVKIVREALSAPLKQIALNAGLEAGVVADKVSHLPAGEGLNAATGEYVDLMAAGINDPVKVTRSALQNAASIAALFLTTEAVVADKPEPAAPAMPGADEMGGMGF.

Residues 29 to 32, 86 to 90, glycine 418, 482 to 484, and aspartate 498 each bind ATP; these read TLGP, DGTTT, and NAA.

The protein belongs to the chaperonin (HSP60) family. In terms of assembly, forms a cylinder of 14 subunits composed of two heptameric rings stacked back-to-back. Interacts with the co-chaperonin GroES.

The protein resides in the cytoplasm. The catalysed reaction is ATP + H2O + a folded polypeptide = ADP + phosphate + an unfolded polypeptide.. Functionally, together with its co-chaperonin GroES, plays an essential role in assisting protein folding. The GroEL-GroES system forms a nano-cage that allows encapsulation of the non-native substrate proteins and provides a physical environment optimized to promote and accelerate protein folding. The polypeptide is Chaperonin GroEL 2 (Corynebacterium diphtheriae (strain ATCC 700971 / NCTC 13129 / Biotype gravis)).